A 462-amino-acid polypeptide reads, in one-letter code: Putative F-box protein At1g12855 (462 aa).

A compositionally biased stretch (basic and acidic residues) spans 1–22; sequence MESREDSFISKEKKSTMKKEKQ. The segment at 1–59 is disordered; sequence MESREDSFISKEKKSTMKKEKQAIASQRNRRRVIKNRGNGKRLIASLSQRKRRRIPRGR. The span at 28-40 shows a compositional bias: basic residues; it reads RNRRRVIKNRGNG. An F-box domain is found at 65–110; that stretch reads VFAPSSLPNDVVEEIFLRLPVKAIIQLKSLSKQWRSTIESRSFEER.

The sequence is that of Putative F-box protein At1g12855 from Arabidopsis thaliana (Mouse-ear cress).